The chain runs to 396 residues: E3 ubiquitin-protein ligase NHLRC1 (396 aa).

Residues 23-69 (CKVCFERFGHRQQRRPRNLPCGHVVCLACVAALAHPRTLALECPFCR) form an RING-type zinc finger. NHL repeat units lie at residues 110–154 (ALTC…FDSG), 158–201 (AHQF…FDFF), 202–242 (GQIK…LEAD), 245–298 (EGVL…FNSS), 299–347 (MQLI…LGKP), and 348–391 (EEFP…FKVM).

As to quaternary structure, interacts with AGL. Interacts (via the NHL repeats) with EPM2A/laforin. Forms a complex with EPM2A/laforin and HSP70.

The protein resides in the endoplasmic reticulum. It localises to the nucleus. It catalyses the reaction S-ubiquitinyl-[E2 ubiquitin-conjugating enzyme]-L-cysteine + [acceptor protein]-L-lysine = [E2 ubiquitin-conjugating enzyme]-L-cysteine + N(6)-ubiquitinyl-[acceptor protein]-L-lysine.. The protein operates within protein modification; protein ubiquitination. Functionally, E3 ubiquitin-protein ligase. Together with the phosphatase EPM2A/laforin, appears to be involved in the clearance of toxic polyglucosan and protein aggregates via multiple pathways. In complex with EPM2A/laforin and HSP70, suppresses the cellular toxicity of misfolded proteins by promoting their degradation through the ubiquitin-proteasome system (UPS). Ubiquitinates the glycogen-targeting protein phosphatase subunits PPP1R3C/PTG and PPP1R3D in a laforin-dependent manner and targets them for proteasome-dependent degradation, thus decreasing glycogen accumulation. Polyubiquitinates EPM2A/laforin and ubiquitinates AGL and targets them for proteasome-dependent degradation. Also promotes proteasome-independent protein degradation through the macroautophagy pathway. The chain is E3 ubiquitin-protein ligase NHLRC1 (Nhlrc1) from Rattus norvegicus (Rat).